Consider the following 444-residue polypeptide: Methylenetetrahydrofolate--tRNA-(uracil-5-)-methyltransferase TrmFO (444 aa).

Residue 10 to 15 (GAGLAG) participates in FAD binding.

Belongs to the MnmG family. TrmFO subfamily. It depends on FAD as a cofactor.

The protein localises to the cytoplasm. The catalysed reaction is uridine(54) in tRNA + (6R)-5,10-methylene-5,6,7,8-tetrahydrofolate + NADH + H(+) = 5-methyluridine(54) in tRNA + (6S)-5,6,7,8-tetrahydrofolate + NAD(+). It carries out the reaction uridine(54) in tRNA + (6R)-5,10-methylene-5,6,7,8-tetrahydrofolate + NADPH + H(+) = 5-methyluridine(54) in tRNA + (6S)-5,6,7,8-tetrahydrofolate + NADP(+). Its function is as follows. Catalyzes the folate-dependent formation of 5-methyl-uridine at position 54 (M-5-U54) in all tRNAs. This chain is Methylenetetrahydrofolate--tRNA-(uracil-5-)-methyltransferase TrmFO, found in Streptococcus sanguinis (strain SK36).